The primary structure comprises 449 residues: tRNA-2-methylthio-N(6)-dimethylallyladenosine synthase (449 aa).

Residues 7–124 (DAFYIHTFGC…LPLLIKQVQQ (118 aa)) enclose the MTTase N-terminal domain. The [4Fe-4S] cluster site is built by C16, C52, C87, C163, C167, and C170. The region spanning 149 to 379 (RSSSMSAFVP…IECQNRISAS (231 aa)) is the Radical SAM core domain. A TRAM domain is found at 382 to 445 (SQAVGSVVEV…SATLLGEPLI (64 aa)).

It belongs to the methylthiotransferase family. MiaB subfamily. As to quaternary structure, monomer. [4Fe-4S] cluster is required as a cofactor.

It localises to the cytoplasm. The enzyme catalyses N(6)-dimethylallyladenosine(37) in tRNA + (sulfur carrier)-SH + AH2 + 2 S-adenosyl-L-methionine = 2-methylsulfanyl-N(6)-dimethylallyladenosine(37) in tRNA + (sulfur carrier)-H + 5'-deoxyadenosine + L-methionine + A + S-adenosyl-L-homocysteine + 2 H(+). In terms of biological role, catalyzes the methylthiolation of N6-(dimethylallyl)adenosine (i(6)A), leading to the formation of 2-methylthio-N6-(dimethylallyl)adenosine (ms(2)i(6)A) at position 37 in tRNAs that read codons beginning with uridine. The sequence is that of tRNA-2-methylthio-N(6)-dimethylallyladenosine synthase from Chlorobium chlorochromatii (strain CaD3).